The following is a 348-amino-acid chain: NADH-quinone oxidoreductase subunit H (348 aa).

8 helical membrane passes run 21 to 41 (IIGI…IIYA), 87 to 107 (GLFL…WAVI), 120 to 140 (IGLL…IIAG), 166 to 186 (IGFV…SAIV), 193 to 213 (IFGF…AVVF), 258 to 278 (NVIL…LPPV), 283 to 303 (LYMV…FFVF), and 323 to 343 (WKVF…WLML).

It belongs to the complex I subunit 1 family. In terms of assembly, NDH-1 is composed of 14 different subunits. Subunits NuoA, H, J, K, L, M, N constitute the membrane sector of the complex.

It localises to the cell inner membrane. It catalyses the reaction a quinone + NADH + 5 H(+)(in) = a quinol + NAD(+) + 4 H(+)(out). Its function is as follows. NDH-1 shuttles electrons from NADH, via FMN and iron-sulfur (Fe-S) centers, to quinones in the respiratory chain. The immediate electron acceptor for the enzyme in this species is believed to be ubiquinone. Couples the redox reaction to proton translocation (for every two electrons transferred, four hydrogen ions are translocated across the cytoplasmic membrane), and thus conserves the redox energy in a proton gradient. This subunit may bind ubiquinone. This chain is NADH-quinone oxidoreductase subunit H, found in Rhizorhabdus wittichii (strain DSM 6014 / CCUG 31198 / JCM 15750 / NBRC 105917 / EY 4224 / RW1) (Sphingomonas wittichii).